We begin with the raw amino-acid sequence, 330 residues long: B3 domain-containing protein REM21 (330 aa).

Positions 23–116 form a DNA-binding region, TF-B3; it reads PRFFTVFLSH…SYEVSIYGRG (94 aa). The span at 129 to 138 shows a compositional bias: acidic residues; the sequence is EISDDTEDDN. A disordered region spans residues 129–169; sequence EISDDTEDDNVSLHSPSNVSLDSLSNDSHHSTSNVSLRSLS. Residues 142–162 are compositionally biased toward low complexity; that stretch reads HSPSNVSLDSLSNDSHHSTSN.

It localises to the nucleus. This is B3 domain-containing protein REM21 (REM21) from Arabidopsis thaliana (Mouse-ear cress).